The sequence spans 370 residues: Formate dehydrogenase (370 aa).

Residues Ile94 and Asn120 each coordinate substrate. NAD(+) is bound by residues 175 to 176 (RI), Asp196, 231 to 235 (PLHES), Thr257, Asp283, and 312 to 315 (HMSG).

Belongs to the D-isomer specific 2-hydroxyacid dehydrogenase family. FDH subfamily. As to quaternary structure, homodimer.

Its subcellular location is the cytoplasm. It carries out the reaction formate + NAD(+) = CO2 + NADH. Catalyzes the NAD(+)-dependent oxidation of formate to carbon dioxide. Formate oxidation is the final step in the methanol oxidation pathway in methylotrophic microorganisms. Has a role in the detoxification of exogenous formate in non-methylotrophic organisms. In Chaetomium thermophilum (strain DSM 1495 / CBS 144.50 / IMI 039719) (Thermochaetoides thermophila), this protein is Formate dehydrogenase.